The primary structure comprises 402 residues: Multidrug resistance protein MdtH (402 aa).

The next 11 membrane-spanning stretches (helical) occupy residues 13-33, 34-54, 99-116, 139-159, 165-185, 214-234, 243-263, 277-297, 300-320, 340-360, and 369-389; these read YFLL…FPLI, SIRF…ALGL, PWVL…GTLF, ILMM…SWLL, LVCS…AWYL, VLTL…LPIM, AAVK…LYPI, LMAG…TSSL, LFTL…ARET, LGLA…FDAG, and PWLM…WQFS.

The protein belongs to the major facilitator superfamily. DHA1 family. MdtH (TC 2.A.1.2.21) subfamily.

The protein localises to the cell inner membrane. This is Multidrug resistance protein MdtH from Klebsiella pneumoniae subsp. pneumoniae (strain ATCC 700721 / MGH 78578).